Reading from the N-terminus, the 465-residue chain is Type II restriction enzyme BsuMI component YdjA (465 aa).

In terms of assembly, bsuMI restriction activity requires YdiR, YdiS and YdjA.

It catalyses the reaction Endonucleolytic cleavage of DNA to give specific double-stranded fragments with terminal 5'-phosphates.. A P subtype restriction enzyme that recognizes the double-stranded sequence 5'-CTCGAG-3'; the cleavage site is unknown. The chain is Type II restriction enzyme BsuMI component YdjA (ydjA) from Bacillus subtilis (strain 168).